Consider the following 64-residue polypeptide: Alpha-like toxin Lqh6 (64 aa).

Residues 2–63 (RDGYIAQPEN…GIIVDGVKCH (62 aa)) form the LCN-type CS-alpha/beta domain. Intrachain disulfides connect C12-C62, C16-C34, C20-C44, and C24-C46. At K64 the chain carries Lysine amide.

This sequence belongs to the long (4 C-C) scorpion toxin superfamily. Sodium channel inhibitor family. Alpha subfamily. As to expression, expressed by the venom gland.

Its subcellular location is the secreted. In terms of biological role, alpha toxins bind voltage-independently at site-3 of sodium channels (Nav) and inhibit the inactivation of the activated channels, thereby blocking neuronal transmission. This toxin is highly toxic to insects and mice, and inhibits the binding of alpha-toxin to cockroach neuronal membranes. The sequence is that of Alpha-like toxin Lqh6 from Leiurus hebraeus (Hebrew deathstalker scorpion).